The following is a 320-amino-acid chain: Cell-cell adhesion glycoprotein 64 (320 aa).

A signal peptide spans 1 to 19 (MNKFITLFVLLASVSVAMS). Disulfide bonds link Cys-39-Cys-57, Cys-67-Cys-79, Cys-73-Cys-86, Cys-98-Cys-110, Cys-104-Cys-115, Cys-123-Cys-138, Cys-132-Cys-147, Cys-157-Cys-171, and Cys-165-Cys-176. A glycan (N-linked (GlcNAc...) asparagine) is linked at Asn-49. The N-linked (GlcNAc...) asparagine glycan is linked to Asn-80. N-linked (GlcNAc...) asparagine glycosylation is found at Asn-141 and Asn-158. Asn-187 carries an N-linked (GlcNAc...) asparagine glycan. Disulfide bonds link Cys-188–Cys-202 and Cys-194–Cys-207. Asn-216 is a glycosylation site (N-linked (GlcNAc...) asparagine). Cystine bridges form between Cys-226–Cys-246, Cys-232–Cys-234, Cys-266–Cys-285, and Cys-270–Cys-281. A lipid anchor (GPI-like-anchor amidated serine) is attached at Ser-298. A propeptide spans 299 to 320 (SATTIAFNAFVVFAIVLSVLLF) (removed in mature form).

Contains 18 disulfide bonds. Post-translationally, the GPI-like-anchor contains a phosphoceramide group, rather than a phosphatidyl group.

The protein resides in the cell membrane. Cell-cell adhesion during development. This chain is Cell-cell adhesion glycoprotein 64, found in Heterostelium pallidum (Cellular slime mold).